The sequence spans 261 residues: Cytochrome c oxidase subunit 3 (261 aa).

The Mitochondrial matrix segment spans residues 1-15 (MTHQTHSYHMVNPSP). Residues 16–34 (WPLTGALSALLMTSGLIMW) traverse the membrane as a helical segment. Residues 35 to 40 (FHFNSM) are Mitochondrial intermembrane-facing. The helical transmembrane segment at 41–66 (ILLTLGLSTNILTMYQWWRDIIREST) threads the bilayer. The Mitochondrial matrix segment spans residues 67 to 72 (FQGHHT). Residues 73–105 (PTVQKGLRYGMILFIVSEVLFFTGFFWAFYHSS) traverse the membrane as a helical segment. Topologically, residues 106 to 128 (LAPTPELGGCWPPTGIHPLNPLE) are mitochondrial intermembrane. A helical membrane pass occupies residues 129-152 (VPLLNTSVLLASGVSITWAHHSLM). Residues 153–155 (EGN) lie on the Mitochondrial matrix side of the membrane. A helical membrane pass occupies residues 156–183 (RKHMLQALFITIALGLYFTLLQASEYYE). At 184-190 (APFTISD) the chain is on the mitochondrial intermembrane side. Residues 191-223 (GIYGSTFFVATGFHGLHVIIGSTFLIVCFLRQV) traverse the membrane as a helical segment. The Mitochondrial matrix segment spans residues 224 to 232 (KFHFTSNHH). Residues 233–256 (FGFERAAWYWHFVDVVWLFLYVSI) form a helical membrane-spanning segment. At 257 to 261 (YWWGS) the chain is on the mitochondrial intermembrane side.

The protein belongs to the cytochrome c oxidase subunit 3 family. Component of the cytochrome c oxidase (complex IV, CIV), a multisubunit enzyme composed of 14 subunits. The complex is composed of a catalytic core of 3 subunits MT-CO1, MT-CO2 and MT-CO3, encoded in the mitochondrial DNA, and 11 supernumerary subunits COX4I, COX5A, COX5B, COX6A, COX6B, COX6C, COX7A, COX7B, COX7C, COX8 and NDUFA4, which are encoded in the nuclear genome. The complex exists as a monomer or a dimer and forms supercomplexes (SCs) in the inner mitochondrial membrane with NADH-ubiquinone oxidoreductase (complex I, CI) and ubiquinol-cytochrome c oxidoreductase (cytochrome b-c1 complex, complex III, CIII), resulting in different assemblies (supercomplex SCI(1)III(2)IV(1) and megacomplex MCI(2)III(2)IV(2)).

Its subcellular location is the mitochondrion inner membrane. It carries out the reaction 4 Fe(II)-[cytochrome c] + O2 + 8 H(+)(in) = 4 Fe(III)-[cytochrome c] + 2 H2O + 4 H(+)(out). Functionally, component of the cytochrome c oxidase, the last enzyme in the mitochondrial electron transport chain which drives oxidative phosphorylation. The respiratory chain contains 3 multisubunit complexes succinate dehydrogenase (complex II, CII), ubiquinol-cytochrome c oxidoreductase (cytochrome b-c1 complex, complex III, CIII) and cytochrome c oxidase (complex IV, CIV), that cooperate to transfer electrons derived from NADH and succinate to molecular oxygen, creating an electrochemical gradient over the inner membrane that drives transmembrane transport and the ATP synthase. Cytochrome c oxidase is the component of the respiratory chain that catalyzes the reduction of oxygen to water. Electrons originating from reduced cytochrome c in the intermembrane space (IMS) are transferred via the dinuclear copper A center (CU(A)) of subunit 2 and heme A of subunit 1 to the active site in subunit 1, a binuclear center (BNC) formed by heme A3 and copper B (CU(B)). The BNC reduces molecular oxygen to 2 water molecules using 4 electrons from cytochrome c in the IMS and 4 protons from the mitochondrial matrix. The sequence is that of Cytochrome c oxidase subunit 3 (MT-CO3) from Balaenoptera musculus (Blue whale).